A 146-amino-acid chain; its full sequence is Phospholipase A2 OS2 (146 aa).

A signal peptide spans 1 to 27 (MHPAHLLVLLAVCVSLLGASDIPPLPL). Intrachain disulfides connect Cys38–Cys99, Cys54–Cys145, Cys56–Cys72, Cys71–Cys126, Cys78–Cys119, Cys88–Cys112, and Cys106–Cys117. Residues Tyr55, Gly57, and Gly59 each contribute to the Ca(2+) site. The active site involves His75. Asp76 lines the Ca(2+) pocket. The active site involves Asp120.

It belongs to the phospholipase A2 family. Group I subfamily. D49 sub-subfamily. In terms of assembly, monomer. It depends on Ca(2+) as a cofactor. In terms of tissue distribution, expressed by the venom gland.

It is found in the secreted. The enzyme catalyses a 1,2-diacyl-sn-glycero-3-phosphocholine + H2O = a 1-acyl-sn-glycero-3-phosphocholine + a fatty acid + H(+). Functionally, snake venom phospholipase A2 (PLA2) that shows high presynaptic neurotoxicity in vertebrata that is independent of catalytic activity, as well as local myotoxicity when intramuscularly injected into mice. Blocks acetylcholine release in Aplysia neurons, and potentiates pro-inflammatory cellular signaling. Potentiates glutamate excitoxicity when coinjected into brain of rats. May act by binding in a calcium-dependent fashion and with high affinity to a neuronal-type (N-type) PLA2 receptor, and with very high affinity to a muscle-type (M-type) PLA2 receptor. In vitro, shows a high-specific activity on E.coli membranes and is more efficient on the anionic phospholipid POPG than on the anionic phospholipid POPS or the zwitterionic phospholipid POPC. Exerts catalytically-independent anti-HIV (IC(50) is 35 nM) activity and catalytically-dependent antimalarial activity (IC(50) is 3.1 nM when tested on P.falciparum grown in serum that contains lipoproteins). PLA2 catalyzes the calcium-dependent hydrolysis of the 2-acyl groups in 3-sn-phosphoglycerides. The polypeptide is Phospholipase A2 OS2 (Oxyuranus scutellatus scutellatus (Australian taipan)).